The sequence spans 353 residues: Thiamine-phosphate synthase (353 aa).

The unknown stretch occupies residues 1 to 128 (MELMVVEADA…ASTAAEIRYG (128 aa)). Residues 129–353 (LYDLEVRILE…ASRTLLQTLA (225 aa)) are thiamine-phosphate synthase. 4-amino-2-methyl-5-(diphosphooxymethyl)pyrimidine contacts are provided by residues 185-189 (QYRRK) and Asn-217. Mg(2+) is bound by residues Asp-218 and Asp-237. Ser-256 is a binding site for 4-amino-2-methyl-5-(diphosphooxymethyl)pyrimidine. 2-[(2R,5Z)-2-carboxy-4-methylthiazol-5(2H)-ylidene]ethyl phosphate is bound at residue 282–284 (TKT). Residue Lys-285 coordinates 4-amino-2-methyl-5-(diphosphooxymethyl)pyrimidine. Gly-312 is a binding site for 2-[(2R,5Z)-2-carboxy-4-methylthiazol-5(2H)-ylidene]ethyl phosphate.

The protein belongs to the thiamine-phosphate synthase family. Mg(2+) serves as cofactor.

It catalyses the reaction 2-[(2R,5Z)-2-carboxy-4-methylthiazol-5(2H)-ylidene]ethyl phosphate + 4-amino-2-methyl-5-(diphosphooxymethyl)pyrimidine + 2 H(+) = thiamine phosphate + CO2 + diphosphate. The enzyme catalyses 2-(2-carboxy-4-methylthiazol-5-yl)ethyl phosphate + 4-amino-2-methyl-5-(diphosphooxymethyl)pyrimidine + 2 H(+) = thiamine phosphate + CO2 + diphosphate. It carries out the reaction 4-methyl-5-(2-phosphooxyethyl)-thiazole + 4-amino-2-methyl-5-(diphosphooxymethyl)pyrimidine + H(+) = thiamine phosphate + diphosphate. It participates in cofactor biosynthesis; thiamine diphosphate biosynthesis; thiamine phosphate from 4-amino-2-methyl-5-diphosphomethylpyrimidine and 4-methyl-5-(2-phosphoethyl)-thiazole: step 1/1. Condenses 4-methyl-5-(beta-hydroxyethyl)thiazole monophosphate (THZ-P) and 2-methyl-4-amino-5-hydroxymethyl pyrimidine pyrophosphate (HMP-PP) to form thiamine monophosphate (TMP). The protein is Thiamine-phosphate synthase of Synechococcus sp. (strain CC9311).